A 111-amino-acid polypeptide reads, in one-letter code: Ig kappa chain V-III region PC 2413 (111 aa).

The framework-1 stretch occupies residues 1–23 (DIVLTQSPASLAVSLGQRATISC). Cys-23 and Cys-92 are disulfide-bonded. The interval 24–38 (RASESVVNYGVSLMH) is complementarity-determining-1. The segment at 39 to 53 (WFQQKPGQPPKLLIY) is framework-2. The interval 54-60 (GASNRGS) is complementarity-determining-2. Positions 61 to 92 (GVPARFSGSGSGTDFSLIIHPMEEDDSAMYFC) are framework-3. Positions 93–101 (HQTKEVPWT) are complementarity-determining-3. A framework-4 region spans residues 102 to 111 (FGGGTDLEIE).

The polypeptide is Ig kappa chain V-III region PC 2413 (Mus musculus (Mouse)).